The primary structure comprises 78 residues: MSATTACWPAFTVLGEARGDQVDWSRLYRDTGLVKMSRKPRASSPFSNNHPSTPKRFPRQPRREKGPVKEVPGTKGSP.

The N-terminal stretch at 1-19 (MSATTACWPAFTVLGEARG) is a signal peptide. The segment at 35–78 (KMSRKPRASSPFSNNHPSTPKRFPRQPRREKGPVKEVPGTKGSP) is disordered.

In terms of tissue distribution, expressed in chondrosarcoma, melanoma, cartilage and testis, but not in other normal tissues.

It is found in the cytoplasm. The protein localises to the cytoskeleton. The protein resides in the microtubule organizing center. It localises to the centrosome. Its subcellular location is the spindle pole. Its function is as follows. May play an important role in maintaining centrosome integrity during mitosis. This Homo sapiens (Human) protein is Chondrosarcoma-associated gene 1 protein.